The sequence spans 433 residues: DNA polymerase processivity factor (433 aa).

The disordered stretch occupies residues 274–433; it reads RGDPFDKNYV…VPNTKKQKCG (160 aa). Gly residues-rich tracts occupy residues 289 to 298, 325 to 336, and 344 to 359; these read SRGGGGGGGS, GLGGLGGGGGGG, and GGGGSGTRKMSSGGGG. Over residues 360-376 the composition is skewed to basic and acidic residues; sequence GDHDHGLSSKEKYEQHK. The segment covering 385-398 has biased composition (gly residues); that stretch reads GGSGGGGGGGGGGL. Residue Lys-410 forms a Glycyl lysine isopeptide (Lys-Gly) (interchain with G-Cter in host SUMO1) linkage. Residues Ser-413, Ser-415, and Ser-418 each carry the phosphoserine modification.

Belongs to the herpesviridae polymerase accessory protein family. In terms of assembly, forms homodimers. Interacts with host SMARCB1. Interacts with host NCL/nucleolin; this interaction is important for the organization of proteins within viral replication compartments. Interacts with UL112/UL113; this interaction is necessary for efficient viral DNA replication. Interacts with UL84. Interacts with the uracil DNA glycosylase UL114. Interacts with the DNA polymerase catalytic subunit UL54. Interacts with host IRF3. Interacts with host RELA. Post-translationally, phosphorylated by UL97 on serine residues, phosphorylation seems important for UL44 nuclear entry but does not directly affect its role in replication. In terms of processing, sumoylated. Sumoylation on Lys-410 increases viral DNA replication.

The protein localises to the virion. It localises to the host nucleus. Its function is as follows. Accessory subunit of the DNA polymerase that plays an essential role in viral DNA replication and acts by increasing the processivity of polymerization. Forms dimers that binds to double-stranded DNA and UL54 specifically to stimulates long chain DNA synthesis efficiently. Plays an important role in maintaining the structure of viral replication compartments by interacting with host nucleolin/NUC. In addition, suppresses innate immune responses through effects on host IRF3 and NF-kappa-B. Mechanistically, interfere with the binding of IRF3 and the p65 NF-kappa-B subunit to the promoters of antiviral genes, thereby inhibiting the expression of these genes. The protein is DNA polymerase processivity factor (UL44) of Homo sapiens (Human).